The primary structure comprises 160 residues: Lymphocyte antigen 86 (160 aa).

The signal sequence occupies residues methionine 1–threonine 20. Cystine bridges form between cysteine 28–cysteine 53, cysteine 40–cysteine 149, and cysteine 97–cysteine 107.

As to quaternary structure, M-shaped tetramer of two CD180-LY86 heterodimers. In terms of tissue distribution, detected in the macrophage-like 10.4 cells.

It localises to the secreted. The protein localises to the extracellular space. In terms of biological role, may cooperate with CD180 and TLR4 to mediate the innate immune response to bacterial lipopolysaccharide (LPS) and cytokine production. Important for efficient CD180 cell surface expression. In Gallus gallus (Chicken), this protein is Lymphocyte antigen 86 (LY86).